The following is a 305-amino-acid chain: Homoserine O-acetyltransferase (305 aa).

Cys-142 functions as the Acyl-thioester intermediate in the catalytic mechanism. Substrate-binding residues include Lys-163 and Ser-192. Catalysis depends on His-235, which acts as the Proton acceptor. The active site involves Glu-237. Substrate is bound at residue Arg-249.

Belongs to the MetA family.

The protein localises to the cytoplasm. The catalysed reaction is L-homoserine + acetyl-CoA = O-acetyl-L-homoserine + CoA. Its pathway is amino-acid biosynthesis; L-methionine biosynthesis via de novo pathway; O-acetyl-L-homoserine from L-homoserine: step 1/1. Transfers an acetyl group from acetyl-CoA to L-homoserine, forming acetyl-L-homoserine. The polypeptide is Homoserine O-acetyltransferase (Bacteroides fragilis (strain ATCC 25285 / DSM 2151 / CCUG 4856 / JCM 11019 / LMG 10263 / NCTC 9343 / Onslow / VPI 2553 / EN-2)).